Here is a 670-residue protein sequence, read N- to C-terminus: Transcriptional regulatory protein DOT6 (670 aa).

A compositionally biased stretch (polar residues) spans 1–44 (MSISTSLNSASIHLSSMDTHPQLHSLTRQPHSSSTAMSKNEAQE). The interval 1 to 78 (MSISTSLNSA…SKNPSSWDPQ (78 aa)) is disordered. Residues 45–74 (SSPSLPASSSSSTSASASASSKNSSKNPSS) are compositionally biased toward low complexity. The 55-residue stretch at 67–121 (NSSKNPSSWDPQDDLLLRHLKEVKKMGWKDISQYFPNRTPNACQFRWRRLKSGNL) folds into the HTH myb-type domain. The H-T-H motif DNA-binding region spans 94–117 (WKDISQYFPNRTPNACQFRWRRLK). The segment covering 226–242 (HHPHQHLHHHPHHKTLK) has biased composition (basic residues). 4 disordered regions span residues 226-250 (HHPH…SHSF), 293-332 (TTPS…NTSR), 406-436 (HSSS…CNPT), and 483-659 (ADML…NSPL). Ser-245 and Ser-247 each carry phosphoserine. Low complexity-rich tracts occupy residues 295–307 (PSSP…LLSS) and 316–332 (NWSR…NTSR). The span at 425–436 (SGHSMKSSCNPT) shows a compositional bias: polar residues. A Phosphoserine modification is found at Ser-487. Thr-489 carries the post-translational modification Phosphothreonine. Position 491 is a phosphoserine (Ser-491). The segment covering 512-522 (DDDKGSDKEDV) has biased composition (basic and acidic residues). Low complexity-rich tracts occupy residues 544–561 (SSNK…SSKD) and 587–598 (TITSDTSSSAAT). Residues 599–608 (MNRTPNSKNP) are compositionally biased toward polar residues. Residues 622–659 (ITPRPKPSSTTTSITTETTNNMINHSSSTTTTTNNSPL) show a composition bias toward low complexity.

It belongs to the DOT6 family. Component of the RPD3C(L) complex composed of at least ASH1, CTI6, DEP1, DOT6, PHO23, RPD3, RXT2, RXT3, SAP30, SDS3, SIN3, TOD6; UME1 and UME6.

The protein localises to the nucleus. In terms of biological role, component of the RPD3 histone deacetylase complex RPD3C(L) responsible for the deacetylation of lysine residues on the N-terminal part of the core histones (H2A, H2B, H3 and H4). Histone deacetylation gives a tag for epigenetic repression and plays an important role in transcriptional regulation, cell cycle progression and developmental events. DOT6 binds to sequences containing the core CGATG, which resembles the PAC (Polymerase A and C) motif. The polypeptide is Transcriptional regulatory protein DOT6 (DOT6) (Saccharomyces cerevisiae (strain ATCC 204508 / S288c) (Baker's yeast)).